Here is a 1703-residue protein sequence, read N- to C-terminus: Mediator of RNA polymerase II transcription subunit 14 (1703 aa).

The segment covering 755-766 (LSQTADLATSSA) has biased composition (polar residues). Positions 755 to 781 (LSQTADLATSSAGPLLRKDQKPRKRSA) are disordered.

The protein belongs to the Mediator complex subunit 14 family. In terms of assembly, component of the Mediator complex. Interacts with CDKE-1, HDA19 and LUG. Interacts with PTAC12/HMR/PAP5 and PIF4. In terms of tissue distribution, expressed in roots, stems, developing embryos, young leaf primordia, shoot apical meristems, inflorescence meristems, tapetum in anthers, ovules and floral organ primordia, but not in mature organs.

The protein resides in the nucleus. Functionally, component of the Mediator complex, a coactivator involved in the regulated transcription of nearly all RNA polymerase II-dependent genes. Mediator functions as a bridge to convey information from gene-specific regulatory proteins to the basal RNA polymerase II transcription machinery. The Mediator complex, having a compact conformation in its free form, is recruited to promoters by direct interactions with regulatory proteins and serves for the assembly of a functional pre-initiation complex with RNA polymerase II and the general transcription factors. Binds to G-box (5'-CACGTG-3')-containing regions of target genes promoters (e.g. IAA29 and IAA19). Involved in defining the duration of cell proliferation. Element of a PIF4/HMR/MED14-dependent thermoresponsive process; required for thermomorphogenetic hypocotyl growth in response to daytime warm temperature elicitation by associating to the promoters of thermoresponsive growth-relevant genes (e.g. mainly involved in biosynthesis and signaling of the phytohormone auxin); this also process implies PIF4 and its transcriptional coactivator PTAC12/HMR/PAP5 to promote the expression of target genes. The chain is Mediator of RNA polymerase II transcription subunit 14 from Arabidopsis thaliana (Mouse-ear cress).